Here is a 380-residue protein sequence, read N- to C-terminus: Histone deacetylase-like amidohydrolase (380 aa).

Catalysis depends on histidine 144, which acts as the Proton donor/acceptor. Residues aspartate 181, histidine 183, and aspartate 269 each contribute to the Zn(2+) site.

The protein belongs to the histone deacetylase family. As to quaternary structure, homotetramer; dimer of head-to-head dimers. Zn(2+) serves as cofactor.

Its activity is regulated as follows. Is inhibited by azobenzenes, stilbenes and arylazopyrazoles. In terms of biological role, probable protein deacetylase that catalyzes deacetylation of acetylated lysine residues. In vitro, exhibits high activity against artificial HDAC (histone deacetylase) substrates containing acetylated and trifluoroacetylated lysine residues. Is not able to deacetylate acetylated polyamines. This is Histone deacetylase-like amidohydrolase from Pseudomonas aeruginosa (strain ATCC 15692 / DSM 22644 / CIP 104116 / JCM 14847 / LMG 12228 / 1C / PRS 101 / PAO1).